A 249-amino-acid chain; its full sequence is Acidic leucine-rich nuclear phosphoprotein 32 family member A (249 aa).

At Thr-15 the chain carries Phosphothreonine. Position 17 is a phosphoserine (Ser-17). LRR repeat units follow at residues 18–41 (DVKELVLDNCRSIEGKIEGLTDEF), 43–64 (ELEFLSTINVGLTSVANLPKLN), 65–87 (KLKKLELSDNRISGGLEVLAEKC), and 89–110 (NLTHLNLSGNKIKDLSTIEPLK). The LRRCT domain maps to 123-161 (CEVTNLNDYRENVFKLLPQLTYLDGYDRDDKEAPDSDAE). A compositionally biased stretch (basic and acidic residues) spans 147–156 (GYDRDDKEAP). Residues 147–249 (GYDRDDKEAP…EPXDXGEDDD (103 aa)) are disordered. Positions 150-174 (RDDKEAPDSDAEGYVEGLDDDEEDE) are necessary for tumor-suppressive function. Residues 157–230 (DSDAEGYVEG…DEEDEEDVGE (74 aa)) are compositionally biased toward acidic residues. Residues Ser-158 and Ser-204 each carry the phosphoserine modification. The segment at 165-249 (EGLDDDEEDE…EPXDXGEDDD (85 aa)) is interaction with E4F1.

This sequence belongs to the ANP32 family. Component of the SET complex, composed of at least ANP32A, APEX1, HMGB2, NME1, SET and TREX1. Directly interacts with SET. Interacts with ATXN1/SCA1. Interacts with MAP1B. Interacts with ELAVL1. Part of the INHAT (inhibitor of histone acetyltransferases) complex. Interacts with E4F1. Post-translationally, phosphorylated on serine residues, at least in part by casein kinase 2/CK2. In terms of processing, some glutamate residues are glycylated by TTLL8. This modification occurs exclusively on glutamate residues and results in a glycine chain on the gamma-carboxyl group.

The protein resides in the nucleus. It is found in the cytoplasm. It localises to the endoplasmic reticulum. Its function is as follows. Multifunctional protein that is involved in the regulation of many processes including tumor suppression, apoptosis, cell cycle progression or transcription. Promotes apoptosis by favouring the activation of caspase-9/CASP9 and allowing apoptosome formation. In addition, plays a role in the modulation of histone acetylation and transcription as part of the INHAT (inhibitor of histone acetyltransferases) complex. Inhibits the histone-acetyltranferase activity of EP300/CREBBP (CREB-binding protein) and EP300/CREBBP-associated factor by histone masking. Preferentially binds to unmodified histone H3 and sterically inhibiting its acetylation and phosphorylation leading to cell growth inhibition. Participates in other biochemical processes such as regulation of mRNA nuclear-to-cytoplasmic translocation and stability by its association with ELAVL1 (Hu-antigen R). Plays a role in E4F1-mediated transcriptional repression as well as inhibition of protein phosphatase 2A. The sequence is that of Acidic leucine-rich nuclear phosphoprotein 32 family member A (ANP32A) from Canis lupus familiaris (Dog).